A 124-amino-acid polypeptide reads, in one-letter code: Large ribosomal subunit protein bL12 (124 aa).

Belongs to the bacterial ribosomal protein bL12 family. Homodimer. Part of the ribosomal stalk of the 50S ribosomal subunit. Forms a multimeric L10(L12)X complex, where L10 forms an elongated spine to which 2 to 4 L12 dimers bind in a sequential fashion. Binds GTP-bound translation factors.

Forms part of the ribosomal stalk which helps the ribosome interact with GTP-bound translation factors. Is thus essential for accurate translation. In Leptothrix cholodnii (strain ATCC 51168 / LMG 8142 / SP-6) (Leptothrix discophora (strain SP-6)), this protein is Large ribosomal subunit protein bL12.